A 342-amino-acid chain; its full sequence is Porphobilinogen deaminase (342 aa).

An S-(dipyrrolylmethanemethyl)cysteine modification is found at Cys249. The segment at 323–342 (AAAKQGAAEDGAADSAATGE) is disordered.

Belongs to the HMBS family. In terms of assembly, monomer. Dipyrromethane is required as a cofactor.

The catalysed reaction is 4 porphobilinogen + H2O = hydroxymethylbilane + 4 NH4(+). Its pathway is porphyrin-containing compound metabolism; protoporphyrin-IX biosynthesis; coproporphyrinogen-III from 5-aminolevulinate: step 2/4. Its function is as follows. Tetrapolymerization of the monopyrrole PBG into the hydroxymethylbilane pre-uroporphyrinogen in several discrete steps. This Paraburkholderia phytofirmans (strain DSM 17436 / LMG 22146 / PsJN) (Burkholderia phytofirmans) protein is Porphobilinogen deaminase.